Here is a 350-residue protein sequence, read N- to C-terminus: Serine-threonine kinase receptor-associated protein (350 aa).

WD repeat units lie at residues 12–56, 57–96, 98–137, 141–179, 180–212, 221–262, and 263–302; these read GHTR…GTFL, GHKG…ELMT, AHKH…AEPK, GHTS…EVKS, LNFN…HSAV, EAPA…ESYK, and GHFG…TYGL. Phosphoserine is present on residues S312, S335, and S338. The interval 327 to 350 is disordered; that stretch reads EEELEEIASENSDSIYSSTPEVKA. Residues 337 to 350 are compositionally biased toward polar residues; it reads NSDSIYSSTPEVKA. Y342 carries the post-translational modification Phosphotyrosine.

Belongs to the WD repeat STRAP family. As to quaternary structure, part of the core SMN complex that contains SMN1, GEMIN2/SIP1, DDX20/GEMIN3, GEMIN4, GEMIN5, GEMIN6, GEMIN7, GEMIN8 and STRAP/UNRIP. Part of the SMN-Sm complex that contains SMN1, GEMIN2/SIP1, DDX20/GEMIN3, GEMIN4, GEMIN5, GEMIN6, GEMIN7, GEMIN8, STRAP/UNRIP and the Sm proteins SNRPB, SNRPD1, SNRPD2, SNRPD3, SNRPE, SNRPF and SNRPG. Interacts directly with GEMIN6 and GEMIN7. Associates with the SMN complex in the cytoplasm but not in the nucleus. Also interacts with CSDE1/UNR and MAWBP. Interacts with PDPK1. Interacts with TRIM48.

The protein localises to the cytoplasm. It is found in the nucleus. Its function is as follows. The SMN complex catalyzes the assembly of small nuclear ribonucleoproteins (snRNPs), the building blocks of the spliceosome, and thereby plays an important role in the splicing of cellular pre-mRNAs. Most spliceosomal snRNPs contain a common set of Sm proteins SNRPB, SNRPD1, SNRPD2, SNRPD3, SNRPE, SNRPF and SNRPG that assemble in a heptameric protein ring on the Sm site of the small nuclear RNA to form the core snRNP (Sm core). In the cytosol, the Sm proteins SNRPD1, SNRPD2, SNRPE, SNRPF and SNRPG are trapped in an inactive 6S pICln-Sm complex by the chaperone CLNS1A that controls the assembly of the core snRNP. To assemble core snRNPs, the SMN complex accepts the trapped 5Sm proteins from CLNS1A forming an intermediate. Binding of snRNA inside 5Sm triggers eviction of the SMN complex, thereby allowing binding of SNRPD3 and SNRPB to complete assembly of the core snRNP. STRAP plays a role in the cellular distribution of the SMN complex. Negatively regulates TGF-beta signaling but positively regulates the PDPK1 kinase activity by enhancing its autophosphorylation and by significantly reducing the association of PDPK1 with 14-3-3 protein. In Bos taurus (Bovine), this protein is Serine-threonine kinase receptor-associated protein (STRAP).